A 108-amino-acid chain; its full sequence is MNKIIELTDQNFEKEVLEHKSFVLVDFWAEWCNPCKILAPILEEIAQEYFNKIKVGKLNIEKNPNTAPIYSIRGIPALLLFHGREVLATKVGAISKLQLKDFLDENIK.

One can recognise a Thioredoxin domain in the interval 2-108 (NKIIELTDQN…LKDFLDENIK (107 aa)). Residues Cys32 and Cys35 are joined by a disulfide bond.

Belongs to the thioredoxin family.

Its function is as follows. Participates in various redox reactions through the reversible oxidation of its active center dithiol to a disulfide and catalyzes dithiol-disulfide exchange reactions. In Buchnera aphidicola subsp. Schizaphis graminum (strain Sg), this protein is Thioredoxin (trxA).